The following is a 134-amino-acid chain: Small ribosomal subunit protein uS11 (134 aa).

The protein belongs to the universal ribosomal protein uS11 family. As to quaternary structure, part of the 30S ribosomal subunit. Interacts with proteins S7 and S18. Binds to IF-3.

Located on the platform of the 30S subunit, it bridges several disparate RNA helices of the 16S rRNA. Forms part of the Shine-Dalgarno cleft in the 70S ribosome. This is Small ribosomal subunit protein uS11 from Frankia alni (strain DSM 45986 / CECT 9034 / ACN14a).